The sequence spans 130 residues: Small ribosomal subunit protein uS9 (130 aa).

This sequence belongs to the universal ribosomal protein uS9 family.

The sequence is that of Small ribosomal subunit protein uS9 from Stutzerimonas stutzeri (strain A1501) (Pseudomonas stutzeri).